The following is a 514-amino-acid chain: 2-isopropylmalate synthase (514 aa).

Residues 5 to 267 form the Pyruvate carboxyltransferase domain; the sequence is LIIFDTTLRD…HTDIETREIV (263 aa). 4 residues coordinate Mn(2+): Asp14, His202, His204, and Asn238. The tract at residues 393–514 is regulatory domain; the sequence is KLVALRVCSE…QRTHPQVGDV (122 aa).

This sequence belongs to the alpha-IPM synthase/homocitrate synthase family. LeuA type 1 subfamily. In terms of assembly, homodimer. Requires Mn(2+) as cofactor.

It localises to the cytoplasm. It carries out the reaction 3-methyl-2-oxobutanoate + acetyl-CoA + H2O = (2S)-2-isopropylmalate + CoA + H(+). It participates in amino-acid biosynthesis; L-leucine biosynthesis; L-leucine from 3-methyl-2-oxobutanoate: step 1/4. In terms of biological role, catalyzes the condensation of the acetyl group of acetyl-CoA with 3-methyl-2-oxobutanoate (2-ketoisovalerate) to form 3-carboxy-3-hydroxy-4-methylpentanoate (2-isopropylmalate). The sequence is that of 2-isopropylmalate synthase from Methylococcus capsulatus (strain ATCC 33009 / NCIMB 11132 / Bath).